The primary structure comprises 240 residues: Anti-H(O) lectin (240 aa).

The N-linked (GlcNAc...) asparagine glycan is linked to asparagine 4. Residues glutamate 124 and aspartate 126 each coordinate Mn(2+). Ca(2+) contacts are provided by aspartate 126, tyrosine 128, asparagine 130, and aspartate 133. Residues aspartate 133 and histidine 141 each coordinate Mn(2+).

The protein belongs to the leguminous lectin family.

Functionally, L-fucose specific lectin. The sequence is that of Anti-H(O) lectin from Lotus tetragonolobus (Winged pea).